We begin with the raw amino-acid sequence, 214 residues long: 3-isopropylmalate dehydratase small subunit (214 aa).

This sequence belongs to the LeuD family. LeuD type 1 subfamily. In terms of assembly, heterodimer of LeuC and LeuD.

The catalysed reaction is (2R,3S)-3-isopropylmalate = (2S)-2-isopropylmalate. It participates in amino-acid biosynthesis; L-leucine biosynthesis; L-leucine from 3-methyl-2-oxobutanoate: step 2/4. Functionally, catalyzes the isomerization between 2-isopropylmalate and 3-isopropylmalate, via the formation of 2-isopropylmaleate. This chain is 3-isopropylmalate dehydratase small subunit, found in Pseudomonas putida (strain W619).